Here is a 267-residue protein sequence, read N- to C-terminus: 5'-nucleotidase SurE (267 aa).

Residues D9, D10, S40, and N97 each contribute to the a divalent metal cation site.

It belongs to the SurE nucleotidase family. A divalent metal cation is required as a cofactor.

Its subcellular location is the cytoplasm. The enzyme catalyses a ribonucleoside 5'-phosphate + H2O = a ribonucleoside + phosphate. In terms of biological role, nucleotidase that shows phosphatase activity on nucleoside 5'-monophosphates. The protein is 5'-nucleotidase SurE of Helicobacter pylori (strain ATCC 700392 / 26695) (Campylobacter pylori).